Here is a 404-residue protein sequence, read N- to C-terminus: Endophilin-B2 (404 aa).

M1 carries the post-translational modification N-acetylmethionine. The membrane-binding amphipathic helix stretch occupies residues M1–F27. At S10 the chain carries Phosphoserine. One can recognise a BAR domain in the interval E24–P291. Positions S209–T239 form a coiled coil. The region spanning S344–S404 is the SH3 domain. S404 bears the Phosphoserine mark.

It belongs to the endophilin family. In terms of assembly, homodimer, and heterodimer with SH3GLB1.

It localises to the cytoplasm. This chain is Endophilin-B2, found in Rattus norvegicus (Rat).